We begin with the raw amino-acid sequence, 103 residues long: ATP-dependent Clp protease adapter protein ClpS (103 aa).

The protein belongs to the ClpS family. Binds to the N-terminal domain of the chaperone ClpA.

Functionally, involved in the modulation of the specificity of the ClpAP-mediated ATP-dependent protein degradation. The chain is ATP-dependent Clp protease adapter protein ClpS from Neisseria meningitidis serogroup A / serotype 4A (strain DSM 15465 / Z2491).